A 691-amino-acid chain; its full sequence is DNA ligase (691 aa).

Residues 41–45 (DAEYD), 90–91 (SL), and E130 each bind NAD(+). The active-site N6-AMP-lysine intermediate is the K132. Residues R153, E190, K307, and K331 each contribute to the NAD(+) site. Positions 425, 428, 443, and 449 each coordinate Zn(2+). Residues 610–691 (APQGVLAGKT…MHTLLEGHAR (82 aa)) form the BRCT domain.

This sequence belongs to the NAD-dependent DNA ligase family. LigA subfamily. Mg(2+) serves as cofactor. Mn(2+) is required as a cofactor.

It catalyses the reaction NAD(+) + (deoxyribonucleotide)n-3'-hydroxyl + 5'-phospho-(deoxyribonucleotide)m = (deoxyribonucleotide)n+m + AMP + beta-nicotinamide D-nucleotide.. Functionally, DNA ligase that catalyzes the formation of phosphodiester linkages between 5'-phosphoryl and 3'-hydroxyl groups in double-stranded DNA using NAD as a coenzyme and as the energy source for the reaction. It is essential for DNA replication and repair of damaged DNA. The polypeptide is DNA ligase (Burkholderia pseudomallei (strain 1106a)).